A 61-amino-acid polypeptide reads, in one-letter code: Small ribosomal subunit protein uS14 (61 aa).

Cys24, Cys27, Cys40, and Cys43 together coordinate Zn(2+).

This sequence belongs to the universal ribosomal protein uS14 family. Zinc-binding uS14 subfamily. In terms of assembly, part of the 30S ribosomal subunit. Contacts proteins S3 and S10. The cofactor is Zn(2+).

Functionally, binds 16S rRNA, required for the assembly of 30S particles and may also be responsible for determining the conformation of the 16S rRNA at the A site. This chain is Small ribosomal subunit protein uS14, found in Desulfitobacterium hafniense (strain Y51).